The primary structure comprises 270 residues: Putative phosphoenolpyruvate synthase regulatory protein (270 aa).

Residue 150–157 (GVSRCGKT) participates in ADP binding.

It belongs to the pyruvate, phosphate/water dikinase regulatory protein family. PSRP subfamily.

The enzyme catalyses [pyruvate, water dikinase] + ADP = [pyruvate, water dikinase]-phosphate + AMP + H(+). It carries out the reaction [pyruvate, water dikinase]-phosphate + phosphate + H(+) = [pyruvate, water dikinase] + diphosphate. In terms of biological role, bifunctional serine/threonine kinase and phosphorylase involved in the regulation of the phosphoenolpyruvate synthase (PEPS) by catalyzing its phosphorylation/dephosphorylation. The polypeptide is Putative phosphoenolpyruvate synthase regulatory protein (Shewanella denitrificans (strain OS217 / ATCC BAA-1090 / DSM 15013)).